A 366-amino-acid chain; its full sequence is HTH-type transcriptional regulator MSMEG_6044/MSMEI_5883 (366 aa).

The HTH lacI-type domain occupies alanine 11–threonine 66. A DNA-binding region (H-T-H motif) is located at residues leucine 13 to asparagine 32.

Its function is as follows. Transcriptional regulator that negatively regulates transcription of the mce4 operon, which is involved in cholesterol transport and utilization. Acts by binding to the promoter region of the mce4 operon. The chain is HTH-type transcriptional regulator MSMEG_6044/MSMEI_5883 from Mycolicibacterium smegmatis (strain ATCC 700084 / mc(2)155) (Mycobacterium smegmatis).